A 1070-amino-acid chain; its full sequence is uncharacterized protein (1070 aa).

Disordered regions lie at residues 66-88 (EKEK…PGLE), 355-388 (DLDF…DFSN), 423-483 (EDDL…EQID), 667-692 (EELK…EETE), and 735-786 (SKTQ…NNNN). Positions 73 to 83 (NENTSNVNKIK) are enriched in low complexity. Composition is skewed to basic and acidic residues over residues 435–460 (KKEE…EEYR) and 474–483 (MKMHEKEQID). Positions 475–736 (KMHEKEQIDD…EMRLQLIRSK (262 aa)) form a coiled coil. Residues 735 to 745 (SKTQGTSSTFI) show a composition bias toward polar residues. Positions 751–765 (KHLESLKEEKKKEVK) are enriched in basic and acidic residues. The segment covering 773–786 (NNNNNNNNNNNNNN) has biased composition (low complexity).

This is an uncharacterized protein from Plasmodium falciparum (isolate 3D7).